We begin with the raw amino-acid sequence, 179 residues long: uncharacterized protein (179 aa).

It localises to the plastid. It is found in the cyanelle. This is an uncharacterized protein from Cyanophora paradoxa.